Here is a 290-residue protein sequence, read N- to C-terminus: MKIAVYGKGGIGKSTTSCNISIALARRGKRVLQIGCDPKHDSTFTLTGFLIPTIIDTLQSKDYHYEDVWPEDVIYKGYGGVDCVEAGGPPAGAGCGGYVVGETVKLLKELNAFYEYDVILFDVLGDVVCGGFAAPLNYADYCIIITDNGFDALFAANRIAASVREKARTHPLRLAGLVGNRTSKRDLIDKYVEACPMPVLEVLPLIEDIRVSRVKGKTLFEMAESEPSLNYVCEFYLNIADQILSQPEGVVPKEVPDRELFSLLSDFYLNPSSSRSDMQLEDNSLDFVMV.

ATP-binding positions include 10-15 (GIGKST) and Lys-39. Ser-14 is a Mg(2+) binding site. Residues Cys-95 and Cys-129 each contribute to the [4Fe-4S] cluster site. 180–181 (NR) contacts ATP.

The protein belongs to the NifH/BchL/ChlL family. As to quaternary structure, homodimer. Protochlorophyllide reductase is composed of three subunits; ChlL, ChlN and ChlB. [4Fe-4S] cluster is required as a cofactor.

Its subcellular location is the plastid. It is found in the chloroplast. It catalyses the reaction chlorophyllide a + oxidized 2[4Fe-4S]-[ferredoxin] + 2 ADP + 2 phosphate = protochlorophyllide a + reduced 2[4Fe-4S]-[ferredoxin] + 2 ATP + 2 H2O. Its pathway is porphyrin-containing compound metabolism; chlorophyll biosynthesis (light-independent). Its function is as follows. Component of the dark-operative protochlorophyllide reductase (DPOR) that uses Mg-ATP and reduced ferredoxin to reduce ring D of protochlorophyllide (Pchlide) to form chlorophyllide a (Chlide). This reaction is light-independent. The L component serves as a unique electron donor to the NB-component of the complex, and binds Mg-ATP. The protein is Light-independent protochlorophyllide reductase iron-sulfur ATP-binding protein of Zygnema circumcarinatum (Green alga).